The chain runs to 639 residues: 1-deoxy-D-xylulose-5-phosphate synthase (639 aa).

Residues H79 and 120–122 contribute to the thiamine diphosphate site; that span reads GHS. D151 provides a ligand contact to Mg(2+). Thiamine diphosphate is bound by residues 152 to 153, N180, Y289, and E371; that span reads GS. Residue N180 coordinates Mg(2+).

The protein belongs to the transketolase family. DXPS subfamily. Homodimer. Requires Mg(2+) as cofactor. Thiamine diphosphate is required as a cofactor.

It catalyses the reaction D-glyceraldehyde 3-phosphate + pyruvate + H(+) = 1-deoxy-D-xylulose 5-phosphate + CO2. The protein operates within metabolic intermediate biosynthesis; 1-deoxy-D-xylulose 5-phosphate biosynthesis; 1-deoxy-D-xylulose 5-phosphate from D-glyceraldehyde 3-phosphate and pyruvate: step 1/1. Functionally, catalyzes the acyloin condensation reaction between C atoms 2 and 3 of pyruvate and glyceraldehyde 3-phosphate to yield 1-deoxy-D-xylulose-5-phosphate (DXP). The protein is 1-deoxy-D-xylulose-5-phosphate synthase of Agrobacterium fabrum (strain C58 / ATCC 33970) (Agrobacterium tumefaciens (strain C58)).